We begin with the raw amino-acid sequence, 125 residues long: Prefoldin subunit beta (125 aa).

It belongs to the prefoldin subunit beta family. Heterohexamer of two alpha and four beta subunits.

It is found in the cytoplasm. Functionally, molecular chaperone capable of stabilizing a range of proteins. Seems to fulfill an ATP-independent, HSP70-like function in archaeal de novo protein folding. The chain is Prefoldin subunit beta (pfdB) from Sulfurisphaera tokodaii (strain DSM 16993 / JCM 10545 / NBRC 100140 / 7) (Sulfolobus tokodaii).